The chain runs to 437 residues: Adenylosuccinate synthetase 1 (437 aa).

GTP contacts are provided by residues 13-19 (GDEGKGK) and 41-43 (GHT). The Proton acceptor role is filled by Asp-14. Mg(2+) is bound by residues Asp-14 and Gly-41. Residues 14-17 (DEGK), 39-42 (NAGH), Thr-130, Arg-144, Gln-225, Thr-240, and Arg-310 contribute to the IMP site. His-42 acts as the Proton donor in catalysis. 306–312 (ATTGRLR) lines the substrate pocket. GTP contacts are provided by residues Arg-312, 338 to 340 (KLD), and 421 to 423 (STG).

The protein belongs to the adenylosuccinate synthetase family. As to quaternary structure, homodimer. Mg(2+) serves as cofactor.

The protein resides in the cytoplasm. The enzyme catalyses IMP + L-aspartate + GTP = N(6)-(1,2-dicarboxyethyl)-AMP + GDP + phosphate + 2 H(+). It participates in purine metabolism; AMP biosynthesis via de novo pathway; AMP from IMP: step 1/2. Plays an important role in the de novo pathway of purine nucleotide biosynthesis. Catalyzes the first committed step in the biosynthesis of AMP from IMP. The polypeptide is Adenylosuccinate synthetase 1 (Pseudoalteromonas translucida (strain TAC 125)).